Here is a 476-residue protein sequence, read N- to C-terminus: Rho GTPase-activating protein 68F (476 aa).

Disordered regions lie at residues 1-35 and 241-266; these read MDAH…DLHD and DKLN…QQQH. Phosphoserine occurs at positions 29 and 31. The 154-residue stretch at 91–244 folds into the CRAL-TRIO domain; that stretch reads SENFQTPRNK…NICDLDDKLN (154 aa). Phosphothreonine is present on threonine 251. Residues 257–266 show a composition bias toward polar residues; it reads NINASRQQQH. The region spanning 276-464 is the Rho-GAP domain; it reads VPLKFIVMNS…FVLQNHKDIY (189 aa).

In terms of biological role, functions as a GTPase-activating protein (GAP) for RhoA/Rho1 during gastrulation by converting it to an inactive GDP-bound state. The polypeptide is Rho GTPase-activating protein 68F (RhoGAP68F) (Drosophila melanogaster (Fruit fly)).